A 797-amino-acid chain; its full sequence is Hid-1 family protein P27G11.12 (797 aa).

It belongs to the hid-1 family.

The protein localises to the cytoplasm. It localises to the nucleus. This chain is Hid-1 family protein P27G11.12, found in Schizosaccharomyces pombe (strain 972 / ATCC 24843) (Fission yeast).